The following is a 264-amino-acid chain: MKQYLELMQKVLDEGTQKNDRTGTGTLSIFGHQMRFNLQEGFPLVTTKRCHLRSIIHELLWFLQGNTNIAYLHENNVTIWDEWADENGDLGPVYGKQWRAWPTPDGRHIDQITTVLNQLKNDPDSRRIIVSAWNVGELDKMALAPCHAFFQFYVADGKLSCQLYQRSCDVFLGLPFNIASYALLVHMMAQQCDLEVGDFVWTGGDTHLYSNHMDQTHLQLSREPRPLPKLIIKRKPESIFDYRFEDFEIEGYDPHPGIKAPVAI.

Arg-21 is a dUMP binding site. Position 51 (His-51) interacts with (6R)-5,10-methylene-5,6,7,8-tetrahydrofolate. 126 to 127 provides a ligand contact to dUMP; the sequence is RR. Residue Cys-146 is the Nucleophile of the active site. Residues 166 to 169, Asn-177, and 207 to 209 each bind dUMP; these read RSCD and HLY. (6R)-5,10-methylene-5,6,7,8-tetrahydrofolate is bound at residue Asp-169. Ala-263 lines the (6R)-5,10-methylene-5,6,7,8-tetrahydrofolate pocket.

The protein belongs to the thymidylate synthase family. Bacterial-type ThyA subfamily. As to quaternary structure, homodimer.

Its subcellular location is the cytoplasm. The catalysed reaction is dUMP + (6R)-5,10-methylene-5,6,7,8-tetrahydrofolate = 7,8-dihydrofolate + dTMP. The protein operates within pyrimidine metabolism; dTTP biosynthesis. Its function is as follows. Catalyzes the reductive methylation of 2'-deoxyuridine-5'-monophosphate (dUMP) to 2'-deoxythymidine-5'-monophosphate (dTMP) while utilizing 5,10-methylenetetrahydrofolate (mTHF) as the methyl donor and reductant in the reaction, yielding dihydrofolate (DHF) as a by-product. This enzymatic reaction provides an intracellular de novo source of dTMP, an essential precursor for DNA biosynthesis. This is Thymidylate synthase from Shigella dysenteriae serotype 1 (strain Sd197).